Consider the following 993-residue polypeptide: uncharacterized protein (993 aa).

Residues 1 to 28 form the signal peptide; it reads MKLFPRSILITLVLSFALNLGIVTKIHA. 7 helical membrane passes run 331 to 351, 359 to 379, 392 to 412, 494 to 514, 521 to 541, 554 to 574, and 699 to 719; these read IVTA…LLAG, YINF…INIT, MIQW…SWVM, MLVS…AFMV, MISI…FLFA, MISF…MFSV, and IKNI…MYNF. Positions 779-904 are disordered; it reads GQGGGASDLE…EKVDSTSKGT (126 aa). Over residues 805-829 the composition is skewed to low complexity; that stretch reads TSAPAVTTPTASSSVASSSPKTVSS. Pro residues predominate over residues 838–850; the sequence is PPAPTEAVSPPPA. The span at 866 to 879 shows a compositional bias: basic and acidic residues; that stretch reads IIRDNNQESKKEID.

It belongs to the TrbL/VirB6 family.

The protein resides in the cell membrane. This is an uncharacterized protein from Rickettsia conorii (strain ATCC VR-613 / Malish 7).